Here is a 252-residue protein sequence, read N- to C-terminus: 5-oxoprolinase subunit A (252 aa).

Belongs to the LamB/PxpA family. As to quaternary structure, forms a complex composed of PxpA, PxpB and PxpC.

It carries out the reaction 5-oxo-L-proline + ATP + 2 H2O = L-glutamate + ADP + phosphate + H(+). Catalyzes the cleavage of 5-oxoproline to form L-glutamate coupled to the hydrolysis of ATP to ADP and inorganic phosphate. The protein is 5-oxoprolinase subunit A of Mycobacterium leprae (strain Br4923).